Here is a 395-residue protein sequence, read N- to C-terminus: Ribosomal RNA small subunit methyltransferase H (395 aa).

Residues 101–103 (GGH), aspartate 120, tyrosine 147, aspartate 171, and glutamine 178 each bind S-adenosyl-L-methionine.

This sequence belongs to the methyltransferase superfamily. RsmH family.

Its subcellular location is the cytoplasm. It carries out the reaction cytidine(1402) in 16S rRNA + S-adenosyl-L-methionine = N(4)-methylcytidine(1402) in 16S rRNA + S-adenosyl-L-homocysteine + H(+). Its function is as follows. Specifically methylates the N4 position of cytidine in position 1402 (C1402) of 16S rRNA. This chain is Ribosomal RNA small subunit methyltransferase H, found in Mycobacterium ulcerans (strain Agy99).